The chain runs to 213 residues: 2,3-bisphosphoglycerate-dependent phosphoglycerate mutase (213 aa).

Substrate is bound by residues 8 to 15 (RHGQSEWN), 21 to 22 (TG), arginine 58, 84 to 87 (ERNY), lysine 95, 111 to 112 (RR), and 155 to 156 (GN). Histidine 9 acts as the Tele-phosphohistidine intermediate in catalysis. Glutamate 84 serves as the catalytic Proton donor/acceptor.

Belongs to the phosphoglycerate mutase family. BPG-dependent PGAM subfamily.

It carries out the reaction (2R)-2-phosphoglycerate = (2R)-3-phosphoglycerate. It participates in carbohydrate degradation; glycolysis; pyruvate from D-glyceraldehyde 3-phosphate: step 3/5. Catalyzes the interconversion of 2-phosphoglycerate and 3-phosphoglycerate. The protein is 2,3-bisphosphoglycerate-dependent phosphoglycerate mutase of Cytophaga hutchinsonii (strain ATCC 33406 / DSM 1761 / CIP 103989 / NBRC 15051 / NCIMB 9469 / D465).